A 418-amino-acid chain; its full sequence is Trans-acting enoyl reductase (418 aa).

This sequence belongs to the saccharopine dehydrogenase family. Enoyl reductase subfamily.

Involved in the reduction of the double bond between C-4 and C-5 during phthiocerol dimycocerosates (DIM A) and glycosylated phenolphthiocerol dimycocerosates (PGL) biosynthesis. In Mycobacterium tuberculosis (strain ATCC 25177 / H37Ra), this protein is Trans-acting enoyl reductase.